Here is a 97-residue protein sequence, read N- to C-terminus: Sperm protein associated with the nucleus on the X chromosome A (97 aa).

The interval 1 to 49 (MDKQSSAGGVKRSVPCDSNEANEMMPETPTGDSDPQPAPKKMKTSESST) is disordered. Positions 37-45 (PAPKKMKTS) match the Nuclear localization signal motif.

This sequence belongs to the SPAN-X family. Detected in testis and sperm.

Its subcellular location is the cytoplasm. The protein resides in the nucleus. In Homo sapiens (Human), this protein is Sperm protein associated with the nucleus on the X chromosome A.